Here is an 89-residue protein sequence, read N- to C-terminus: Small ribosomal subunit protein uS15 (89 aa).

The interval 1 to 22 is disordered; that stretch reads MALEKEEKSQIINNYQLHETDT. Positions 10–22 are enriched in polar residues; that stretch reads QIINNYQLHETDT.

It belongs to the universal ribosomal protein uS15 family. Part of the 30S ribosomal subunit. Forms a bridge to the 50S subunit in the 70S ribosome, contacting the 23S rRNA.

Functionally, one of the primary rRNA binding proteins, it binds directly to 16S rRNA where it helps nucleate assembly of the platform of the 30S subunit by binding and bridging several RNA helices of the 16S rRNA. In terms of biological role, forms an intersubunit bridge (bridge B4) with the 23S rRNA of the 50S subunit in the ribosome. The chain is Small ribosomal subunit protein uS15 from Chloroflexus aggregans (strain MD-66 / DSM 9485).